Here is a 136-residue protein sequence, read N- to C-terminus: Putative pre-16S rRNA nuclease (136 aa).

This sequence belongs to the YqgF nuclease family.

The protein resides in the cytoplasm. Its function is as follows. Could be a nuclease involved in processing of the 5'-end of pre-16S rRNA. In Francisella tularensis subsp. holarctica (strain FTNF002-00 / FTA), this protein is Putative pre-16S rRNA nuclease.